A 480-amino-acid polypeptide reads, in one-letter code: Trigger factor (480 aa).

The PPIase FKBP-type domain occupies 161–249; sequence GDRLLITGKF…VVEVLKEQLP (89 aa). Positions 426–480 are disordered; it reads TEEPVEKEAEEKNEEFAIDHEVLPTKDHDAIPAAKYDDNTPKGAETEDKQEKDKD. Basic and acidic residues predominate over residues 429–480; sequence PVEKEAEEKNEEFAIDHEVLPTKDHDAIPAAKYDDNTPKGAETEDKQEKDKD.

This sequence belongs to the FKBP-type PPIase family. Tig subfamily.

The protein localises to the cytoplasm. The enzyme catalyses [protein]-peptidylproline (omega=180) = [protein]-peptidylproline (omega=0). In terms of biological role, involved in protein export. Acts as a chaperone by maintaining the newly synthesized protein in an open conformation. Functions as a peptidyl-prolyl cis-trans isomerase. This Rhodopirellula baltica (strain DSM 10527 / NCIMB 13988 / SH1) protein is Trigger factor.